A 67-amino-acid polypeptide reads, in one-letter code: DNA-directed RNA polymerase subunit omega (67 aa).

The protein belongs to the RNA polymerase subunit omega family. The RNAP catalytic core consists of 2 alpha, 1 beta, 1 beta' and 1 omega subunit. When a sigma factor is associated with the core the holoenzyme is formed, which can initiate transcription.

It catalyses the reaction RNA(n) + a ribonucleoside 5'-triphosphate = RNA(n+1) + diphosphate. Promotes RNA polymerase assembly. Latches the N- and C-terminal regions of the beta' subunit thereby facilitating its interaction with the beta and alpha subunits. In Variovorax paradoxus (strain S110), this protein is DNA-directed RNA polymerase subunit omega.